We begin with the raw amino-acid sequence, 498 residues long: Early growth response protein 1 (498 aa).

Disordered stretches follow at residues 137–203 (NASP…TASI) and 287–308 (PSRMRKYPNRPSKTPPHERPYA). Positions 139–163 (SPSSAPSSSPSSSSSSSQSPPLSCS) are enriched in low complexity. Residues 179 to 202 (FPNSSPELFPDQSPQPFQNASTAS) show a composition bias toward polar residues. 3 C2H2-type zinc fingers span residues 307–331 (YACPVESCDRRFSRSDELTRHIRIH), 337–359 (FQCRICMRNFSRSDHLTTHIRTH), and 365–387 (FACDICGRKFARSDERKRHTKIH). The interval 378–422 (DERKRHTKIHLRQKDKKADKATPVSVASPVSSYSPSASTSYPSPV) is disordered. Over residues 382–392 (RHTKIHLRQKD) the composition is skewed to basic residues. Residues 398–422 (ATPVSVASPVSSYSPSASTSYPSPV) are compositionally biased toward low complexity.

The protein belongs to the EGR C2H2-type zinc-finger protein family.

The protein localises to the nucleus. The protein resides in the cytoplasm. In terms of biological role, transcriptional regulator. Recognizes and binds to the DNA sequence 5'-GCG(T/G)GGGCG-3'(EGR-site) in the promoter region of target genes. Binds double-stranded target DNA, irrespective of the cytosine methylation status. Regulates the transcription of numerous target genes, and thereby plays an important role in regulating the response to growth factors, DNA damage, and ischemia. Plays a role in the regulation of cell survival, proliferation and cell death. Mediates responses to ischemia and hypoxia; regulates the expression of proteins that are involved in inflammatory processes. Plays a role in regulating the expression of circadian clock genes. The chain is Early growth response protein 1 from Xenopus tropicalis (Western clawed frog).